The following is a 44-amino-acid chain: Cytochrome b559 subunit beta (44 aa).

The chain crosses the membrane as a helical span at residues 19–35 (WLSIHALAVPTIFFLGS). His23 contacts heme.

This sequence belongs to the PsbE/PsbF family. As to quaternary structure, heterodimer of an alpha subunit and a beta subunit. PSII is composed of 1 copy each of membrane proteins PsbA, PsbB, PsbC, PsbD, PsbE, PsbF, PsbH, PsbI, PsbJ, PsbK, PsbL, PsbM, PsbT, PsbX, PsbY, PsbZ, Psb30/Ycf12, at least 3 peripheral proteins of the oxygen-evolving complex and a large number of cofactors. It forms dimeric complexes. It depends on heme b as a cofactor.

It is found in the plastid. The protein resides in the chloroplast thylakoid membrane. In terms of biological role, this b-type cytochrome is tightly associated with the reaction center of photosystem II (PSII). PSII is a light-driven water:plastoquinone oxidoreductase that uses light energy to abstract electrons from H(2)O, generating O(2) and a proton gradient subsequently used for ATP formation. It consists of a core antenna complex that captures photons, and an electron transfer chain that converts photonic excitation into a charge separation. This Tetradesmus obliquus (Green alga) protein is Cytochrome b559 subunit beta.